The following is a 225-amino-acid chain: NAD(P)H-quinone oxidoreductase subunit K, chloroplastic (225 aa).

The [4Fe-4S] cluster site is built by C43, C44, C108, and C139.

The protein belongs to the complex I 20 kDa subunit family. NDH is composed of at least 16 different subunits, 5 of which are encoded in the nucleus. It depends on [4Fe-4S] cluster as a cofactor.

It is found in the plastid. It localises to the chloroplast thylakoid membrane. It carries out the reaction a plastoquinone + NADH + (n+1) H(+)(in) = a plastoquinol + NAD(+) + n H(+)(out). The enzyme catalyses a plastoquinone + NADPH + (n+1) H(+)(in) = a plastoquinol + NADP(+) + n H(+)(out). Its function is as follows. NDH shuttles electrons from NAD(P)H:plastoquinone, via FMN and iron-sulfur (Fe-S) centers, to quinones in the photosynthetic chain and possibly in a chloroplast respiratory chain. The immediate electron acceptor for the enzyme in this species is believed to be plastoquinone. Couples the redox reaction to proton translocation, and thus conserves the redox energy in a proton gradient. In Lactuca sativa (Garden lettuce), this protein is NAD(P)H-quinone oxidoreductase subunit K, chloroplastic.